Consider the following 90-residue polypeptide: Acylphosphatase (90 aa).

The Acylphosphatase-like domain occupies 3–90 (QYHMIADGRV…KGYRTFSISY (88 aa)). Active-site residues include Arg-18 and Asn-36.

Belongs to the acylphosphatase family.

The enzyme catalyses an acyl phosphate + H2O = a carboxylate + phosphate + H(+). The sequence is that of Acylphosphatase (acyP) from Bacillus velezensis (strain DSM 23117 / BGSC 10A6 / LMG 26770 / FZB42) (Bacillus amyloliquefaciens subsp. plantarum).